The sequence spans 204 residues: Golgi to ER traffic protein 1 (204 aa).

The Lumenal segment spans residues 1 to 11; the sequence is MLTLDIDPYTI. Residues 12–31 form a helical membrane-spanning segment; sequence LVTSFLILAIQKLVTVIGKQ. The Cytoplasmic portion of the chain corresponds to 32–116; it reads KIQLYIWQIY…RIDSITKLAI (85 aa). Residues 78–113 are a coiled coil; the sequence is AKWTKINRALDKLKLEVQELNETIAGEKTRIDSITK. The helical transmembrane segment at 117–137 threads the bilayer; sequence TLILTLPIWFLRIFCRKTALL. The Lumenal segment spans residues 138 to 161; the sequence is YIRKGILPAYLEWWLALPFFKSGT. The chain crosses the membrane as a helical span at residues 162-178; that stretch reads IGLTCWMFVVNSVLSNL. The Cytoplasmic segment spans residues 179 to 204; the sequence is IFLISFPFTQKVERPIKPKNEQKTES.

This sequence belongs to the WRB/GET1 family. In terms of assembly, component of the Golgi to ER traffic (GET) complex, which is composed of GET1, GET2 and GET3. Within the complex, GET1 and GET2 form a heterotetramer which is stabilized by phosphatidylinositol binding and which binds to the GET3 homodimer.

The protein localises to the endoplasmic reticulum membrane. The protein resides in the golgi apparatus membrane. Functionally, required for the post-translational delivery of tail-anchored (TA) proteins to the endoplasmic reticulum. Together with GET2, acts as a membrane receptor for soluble GET3, which recognizes and selectively binds the transmembrane domain of TA proteins in the cytosol. The GET complex cooperates with the HDEL receptor ERD2 to mediate the ATP-dependent retrieval of resident ER proteins that contain a C-terminal H-D-E-L retention signal from the Golgi to the ER. This Lodderomyces elongisporus (strain ATCC 11503 / CBS 2605 / JCM 1781 / NBRC 1676 / NRRL YB-4239) (Yeast) protein is Golgi to ER traffic protein 1.